The chain runs to 138 residues: Large ribosomal subunit protein uL16 (138 aa).

Residues 1–13 show a composition bias toward basic residues; it reads MLQPSRRKFRKEQ. The disordered stretch occupies residues 1-20; sequence MLQPSRRKFRKEQKGRNTGV.

This sequence belongs to the universal ribosomal protein uL16 family. Part of the 50S ribosomal subunit.

Binds 23S rRNA and is also seen to make contacts with the A and possibly P site tRNAs. The polypeptide is Large ribosomal subunit protein uL16 (Leptothrix cholodnii (strain ATCC 51168 / LMG 8142 / SP-6) (Leptothrix discophora (strain SP-6))).